The primary structure comprises 371 residues: Aminomethyltransferase (371 aa).

This sequence belongs to the GcvT family. In terms of assembly, the glycine cleavage system is composed of four proteins: P, T, L and H.

The enzyme catalyses N(6)-[(R)-S(8)-aminomethyldihydrolipoyl]-L-lysyl-[protein] + (6S)-5,6,7,8-tetrahydrofolate = N(6)-[(R)-dihydrolipoyl]-L-lysyl-[protein] + (6R)-5,10-methylene-5,6,7,8-tetrahydrofolate + NH4(+). The glycine cleavage system catalyzes the degradation of glycine. The sequence is that of Aminomethyltransferase from Cutibacterium acnes (strain DSM 16379 / KPA171202) (Propionibacterium acnes).